Here is a 283-residue protein sequence, read N- to C-terminus: Shikimate dehydrogenase (NADP(+)) (283 aa).

Shikimate-binding positions include 16–18 (SLS) and threonine 63. Lysine 67 acts as the Proton acceptor in catalysis. An NADP(+)-binding site is contributed by aspartate 79. Residues asparagine 88 and aspartate 103 each contribute to the shikimate site. NADP(+)-binding positions include 128–132 (GAGGA), alanine 223, and glycine 243.

It belongs to the shikimate dehydrogenase family. As to quaternary structure, homodimer.

The catalysed reaction is shikimate + NADP(+) = 3-dehydroshikimate + NADPH + H(+). Its pathway is metabolic intermediate biosynthesis; chorismate biosynthesis; chorismate from D-erythrose 4-phosphate and phosphoenolpyruvate: step 4/7. Its function is as follows. Involved in the biosynthesis of the chorismate, which leads to the biosynthesis of aromatic amino acids. Catalyzes the reversible NADPH linked reduction of 3-dehydroshikimate (DHSA) to yield shikimate (SA). The chain is Shikimate dehydrogenase (NADP(+)) from Xanthomonas oryzae pv. oryzae (strain MAFF 311018).